Consider the following 202-residue polypeptide: Protease (202 aa).

Active-site residues include His55, Asp72, and Cys122.

It belongs to the peptidase C5 family. As to quaternary structure, interacts with protease cofactor pVI-C; this interaction is necessary for protease activation.

It is found in the virion. It localises to the host nucleus. It catalyses the reaction Cleaves proteins of the adenovirus and its host cell at two consensus sites: -Yaa-Xaa-Gly-Gly-|-Xaa- and -Yaa-Xaa-Gly-Xaa-|-Gly- (in which Yaa is Met, Ile or Leu, and Xaa is any amino acid).. Requires DNA and protease cofactor for maximal activation. Inside nascent virions, becomes partially activated by binding to the viral DNA, allowing it to cleave the cofactor that binds to the protease and fully activates it. Actin, like the viral protease cofactor, seems to act as a cofactor in the cleavage of cytokeratin 18 and of actin itself. Functionally, cleaves viral precursor proteins (pTP, pIIIa, pVI, pVII, pVIII, and pX) inside newly assembled particles giving rise to mature virions. Protease complexed to its cofactor slides along the viral DNA to specifically locate and cleave the viral precursors. Mature virions have a weakened organization compared to the unmature virions, thereby facilitating subsequent uncoating. Without maturation, the particle lacks infectivity and is unable to uncoat. Late in adenovirus infection, in the cytoplasm, may participate in the cytoskeleton destruction. Cleaves host cell cytoskeletal keratins K7 and K18. The protein is Protease of Bovine adenovirus 7 (BAdV-7).